The primary structure comprises 1250 residues: DNA topoisomerase 3-alpha (1250 aa).

Residues 27–171 (KYLNVAEKND…NISVYRATFS (145 aa)) form the Toprim domain. Residues 189–610 (DKRQSDAVDV…EQIAKYKQAY (422 aa)) enclose the Topo IA-type catalytic domain. The active-site O-(5'-phospho-DNA)-tyrosine intermediate is the Tyr-356. Positions 769–835 (RGGGGGPGPG…GTGGGGLGGG (67 aa)) are enriched in gly residues. 2 disordered regions span residues 769–899 (RGGG…GLDE) and 953–1035 (NGGT…TVLC). Basic and acidic residues predominate over residues 840-865 (PGGESKKSATKKPPNEPKPKKTKEPK). The segment covering 866–886 (AAPNKKTSSKSSGSIRSFFTS) has biased composition (low complexity). Positions 956–965 (TMPTESNGDQ) are enriched in polar residues. 2 stretches are compositionally biased toward basic and acidic residues: residues 966–994 (QLDK…RERA) and 1012–1021 (PRWDSVERDS). The segment covering 1022-1033 (TPPSSVPESETV) has biased composition (low complexity). The Zn(2+) site is built by Cys-1035, Cys-1038, Cys-1061, and Cys-1067. The segment at 1035–1076 (CTGCQQPARQNTVRKNGPNLGRLYYKCPKPDECNFFQWADEP) adopts a GRF-type 1 zinc-finger fold. The interval 1069 to 1150 (FFQWADEPPS…TATPGDGEEV (82 aa)) is disordered. Positions 1079 to 1101 (SAKSKNSTGSAPQSTTSWGSNRV) are enriched in polar residues. Over residues 1106–1134 (SIQQSNSQRGQSSMRSNSSSTVTITQTKT) the composition is skewed to low complexity. Residues Cys-1152, Cys-1154, Cys-1177, and Cys-1184 each contribute to the Zn(2+) site. The GRF-type 2 zinc finger occupies 1152 to 1193 (CNCGQLASQLTVRKDGPNQGRPFYACPTREKSCGFFKWGDED). A disordered region spans residues 1188-1231 (KWGDEDQNQGASSTSWGSANRNPPGRSQPTAITSDGPKTRRCGL). A compositionally biased stretch (polar residues) spans 1195 to 1220 (NQGASSTSWGSANRNPPGRSQPTAIT).

It belongs to the type IA topoisomerase family.

The enzyme catalyses ATP-independent breakage of single-stranded DNA, followed by passage and rejoining.. Releases the supercoiling and torsional tension of DNA introduced during the DNA replication and transcription by transiently cleaving and rejoining one strand of the DNA duplex. Introduces a single-strand break via transesterification at a target site in duplex DNA. The scissile phosphodiester is attacked by the catalytic tyrosine of the enzyme, resulting in the formation of a DNA-(5'-phosphotyrosyl)-enzyme intermediate and the expulsion of a 3'-OH DNA strand. The free DNA strand than undergoes passage around the unbroken strand thus removing DNA supercoils. Finally, in the religation step, the DNA 3'-OH attacks the covalent intermediate to expel the active-site tyrosine and restore the DNA phosphodiester backbone. Weakly relaxes negative supercoils and displays a distinct preference for binding single-stranded DNA. In Drosophila melanogaster (Fruit fly), this protein is DNA topoisomerase 3-alpha (Top3alpha).